We begin with the raw amino-acid sequence, 637 residues long: MPIEDVLLDLKHKIEKNLPAGVTITDVEFEGPQLVLYTEEPRKFADDGNIIRNLAKELRTRIAMRPDPRVLATPEDSISIIEEVVPKESVISSYYFDPDSGEVIIEAEKPGLVIGKHGATLREITKQIGWIPKVVRTPPIKSRTVKNIREFMRNNLKERKEILKTVGRKIHRECTSKDQWVRVTALGGCKEVGRSCFLLSTPESRILIDCGVNVGSDENMTPYLYVPEVFPLNQIDAVIVTHAHLDHQGLVPLLFKYGYEGPVYCTPPTRDLMVLLQLDYIDVAAKEGKKIPYESGMVAKTLKHTIPLDYEEVTDIAPDIKLTFHNAGHILGSAISHFHIGDGLHNVVFTGDYKYEKTRLFDPAVNKFPRVETVISEATYGNANAFQPALKDAEKHLQMVVKNTIERGGIAVIPAFAVGRSQEVMIVLEESIRKGLIPEVPVYLDGMIWEATAIHATHPEYLNNDLRKLIFQKGQNPFLSECFKPVDSHEARQKIIQNPQPCVILATSGMMNGGPVMEYFKAFAEDPRNTLVFVGYQADGTIGRRIQKGWKEIPMTGKNGSTEMLKMNMEVQVVDGFSGHSDRRQLMEYVKRMQPRPERVFTEHGDEKACVDLASSVYKKLKIETRALTNLETVRLL.

Residues 4–71 (EDVLLDLKHK…IAMRPDPRVL (68 aa)) are KHa. The segment at 72–139 (ATPEDSISII…WIPKVVRTPP (68 aa)) is KHb. Residues 180–383 (WVRVTALGGC…VISEATYGNA (204 aa)) form a metallo-beta-lactamase N-terminus region. Residues histidine 242, histidine 244, aspartate 246, histidine 247, histidine 329, and aspartate 352 each coordinate Zn(2+). Residues 384-578 (NAFQPALKDA…MEVQVVDGFS (195 aa)) are beta-Casp. Positions 579-637 (GHSDRRQLMEYVKRMQPRPERVFTEHGDEKACVDLASSVYKKLKIETRALTNLETVRLL) are metallo-beta-lactamase C-terminus. Histidine 604 provides a ligand contact to Zn(2+).

It belongs to the metallo-beta-lactamase superfamily. RNA-metabolizing metallo-beta-lactamase-like family. FttA subfamily. As to quaternary structure, homodimer. Interacts with RNA polymerase (RNAP), interacts with the Spt4-Spt5 complex. The cofactor is Zn(2+).

Functionally, terminates transcription on the whole genome. Termination is linked to FttA-mediated RNA cleavage and does not require NTP hydrolysis. Cleaves endonucleolytically at the RNA exit channel of RNA polymerase (RNAP); the 5'-3' exonuclease activity of this protein degrades the nascent RNA released from RNAP. The sequence is that of Transcription termination factor FttA from Methanosarcina mazei (strain ATCC BAA-159 / DSM 3647 / Goe1 / Go1 / JCM 11833 / OCM 88) (Methanosarcina frisia).